A 217-amino-acid polypeptide reads, in one-letter code: 2-phospho-L-lactate guanylyltransferase (217 aa).

This sequence belongs to the CofC family. Homodimer.

The catalysed reaction is (2S)-2-phospholactate + GTP + H(+) = (2S)-lactyl-2-diphospho-5'-guanosine + diphosphate. Its pathway is cofactor biosynthesis; coenzyme F420 biosynthesis. Functionally, guanylyltransferase that catalyzes the activation of (2S)-2-phospholactate (2-PL) as (2S)-lactyl-2-diphospho-5'-guanosine, via the condensation of 2-PL with GTP. It is involved in the biosynthesis of coenzyme F420, a hydride carrier cofactor. In Methanospirillum hungatei JF-1 (strain ATCC 27890 / DSM 864 / NBRC 100397 / JF-1), this protein is 2-phospho-L-lactate guanylyltransferase.